Reading from the N-terminus, the 114-residue chain is Iron-sulfur cluster insertion protein ErpA (114 aa).

Iron-sulfur cluster-binding residues include Cys42, Cys106, and Cys108.

This sequence belongs to the HesB/IscA family. Homodimer. It depends on iron-sulfur cluster as a cofactor.

Required for insertion of 4Fe-4S clusters for at least IspG. This chain is Iron-sulfur cluster insertion protein ErpA, found in Pasteurella multocida (strain Pm70).